A 408-amino-acid chain; its full sequence is tRNA-specific 2-thiouridylase MnmA (408 aa).

ATP contacts are provided by residues 27–34 and L53; that span reads AMSGGVDS. The Nucleophile role is filled by C121. C121 and C222 are oxidised to a cystine. G145 provides a ligand contact to ATP. The interaction with tRNA stretch occupies residues 172–174; sequence RDQ. The Cysteine persulfide intermediate role is filled by C222.

Belongs to the MnmA/TRMU family.

The protein resides in the cytoplasm. The catalysed reaction is S-sulfanyl-L-cysteinyl-[protein] + uridine(34) in tRNA + AH2 + ATP = 2-thiouridine(34) in tRNA + L-cysteinyl-[protein] + A + AMP + diphosphate + H(+). Functionally, catalyzes the 2-thiolation of uridine at the wobble position (U34) of tRNA, leading to the formation of s(2)U34. The chain is tRNA-specific 2-thiouridylase MnmA from Rhizobium etli (strain CIAT 652).